The sequence spans 367 residues: Peptide chain release factor 2 (367 aa).

Gln254 bears the N5-methylglutamine mark.

It belongs to the prokaryotic/mitochondrial release factor family. In terms of processing, methylated by PrmC. Methylation increases the termination efficiency of RF2.

It is found in the cytoplasm. In terms of biological role, peptide chain release factor 2 directs the termination of translation in response to the peptide chain termination codons UGA and UAA. This Leptospira interrogans serogroup Icterohaemorrhagiae serovar copenhageni (strain Fiocruz L1-130) protein is Peptide chain release factor 2.